The primary structure comprises 269 residues: 4-hydroxy-tetrahydrodipicolinate reductase (269 aa).

Residues 11–16 and glutamate 37 contribute to the NAD(+) site; that span reads GASGRM. Residue arginine 38 coordinates NADP(+). NAD(+) is bound by residues 101–103 and 125–128; these read GTT and AGNM. Histidine 158 acts as the Proton donor/acceptor in catalysis. Histidine 159 contributes to the (S)-2,3,4,5-tetrahydrodipicolinate binding site. Lysine 162 acts as the Proton donor in catalysis. 168–169 is a binding site for (S)-2,3,4,5-tetrahydrodipicolinate; the sequence is GT.

It belongs to the DapB family.

It localises to the cytoplasm. The enzyme catalyses (S)-2,3,4,5-tetrahydrodipicolinate + NAD(+) + H2O = (2S,4S)-4-hydroxy-2,3,4,5-tetrahydrodipicolinate + NADH + H(+). The catalysed reaction is (S)-2,3,4,5-tetrahydrodipicolinate + NADP(+) + H2O = (2S,4S)-4-hydroxy-2,3,4,5-tetrahydrodipicolinate + NADPH + H(+). The protein operates within amino-acid biosynthesis; L-lysine biosynthesis via DAP pathway; (S)-tetrahydrodipicolinate from L-aspartate: step 4/4. In terms of biological role, catalyzes the conversion of 4-hydroxy-tetrahydrodipicolinate (HTPA) to tetrahydrodipicolinate. The chain is 4-hydroxy-tetrahydrodipicolinate reductase from Ruegeria sp. (strain TM1040) (Silicibacter sp.).